A 185-amino-acid chain; its full sequence is Ribosome-recycling factor (185 aa).

This sequence belongs to the RRF family.

Its subcellular location is the cytoplasm. Its function is as follows. Responsible for the release of ribosomes from messenger RNA at the termination of protein biosynthesis. May increase the efficiency of translation by recycling ribosomes from one round of translation to another. In Corynebacterium kroppenstedtii (strain DSM 44385 / JCM 11950 / CIP 105744 / CCUG 35717), this protein is Ribosome-recycling factor.